A 360-amino-acid chain; its full sequence is Chorismate synthase (360 aa).

An NADP(+)-binding site is contributed by R48. FMN-binding positions include 125–127, 242–243, G286, 301–305, and R327; these read RSS, NA, and KPTSS.

This sequence belongs to the chorismate synthase family. As to quaternary structure, homotetramer. The cofactor is FMNH2.

It carries out the reaction 5-O-(1-carboxyvinyl)-3-phosphoshikimate = chorismate + phosphate. Its pathway is metabolic intermediate biosynthesis; chorismate biosynthesis; chorismate from D-erythrose 4-phosphate and phosphoenolpyruvate: step 7/7. In terms of biological role, catalyzes the anti-1,4-elimination of the C-3 phosphate and the C-6 proR hydrogen from 5-enolpyruvylshikimate-3-phosphate (EPSP) to yield chorismate, which is the branch point compound that serves as the starting substrate for the three terminal pathways of aromatic amino acid biosynthesis. This reaction introduces a second double bond into the aromatic ring system. The polypeptide is Chorismate synthase (Pelagibacter ubique (strain HTCC1062)).